We begin with the raw amino-acid sequence, 414 residues long: Meiotic driver wtf19 (414 aa).

The segment at Met1–Asp94 is disordered. A compositionally biased stretch (basic and acidic residues) spans Ser11 to Pro29. The span at Gly57–Pro72 shows a compositional bias: polar residues. The next 9 membrane-spanning stretches (helical) occupy residues Phe99–Cys119, Trp136–Phe156, Val170–Val190, Val192–Val212, Cys222–Phe242, Glu247–Val267, Thr284–Trp304, Leu311–Phe331, and Gly339–Met359.

The protein belongs to the WTF family. In terms of assembly, homomer. Forms protein aggregates. The two isoforms can interact with each other and with themselves. High sequence similarity is required for their interaction.

The protein localises to the spore membrane. Its subcellular location is the vacuole membrane. The protein resides in the ascus epiplasm. It localises to the cytoplasm. It is found in the endoplasmic reticulum membrane. In terms of biological role, promotes unequal transmission of alleles from the parental zygote to progeny spores by acting as poison/antidote system where the poison and antidote proteins are produced from the same locus; the poison component is trans-acting and targets all spores within an ascus whereas the antidote component is spore-specific, leading to poisoning of all progeny that do not inherit the allele. Functionally, localizes isoform 2 to the vacuole thereby facilitating its degradation. Its function is as follows. Forms toxic aggregates that disrupt spore maturation. The chain is Meiotic driver wtf19 from Schizosaccharomyces kambucha (Fission yeast).